The following is a 256-amino-acid chain: Undecaprenyl-diphosphatase (256 aa).

8 consecutive transmembrane segments (helical) span residues 5–25 (IIEIIILSIVQGISEFLPISS), 41–61 (NSLMIDVSLHLGSLLAIVFYF), 74–94 (LLSLLIIGSIPIVIAGYVISS), 100–120 (LLENNLKIIAWTTLIFGIILY), 135–155 (LNFKTILYIGLFQILALIPGV), 180–200 (FLLAIPAIAGASVLQLKNAIG), 208–228 (LVLISITLSFLFSYFTVKFFL), and 234–254 (FSLNVFVIYRIIISIILFIII).

It belongs to the UppP family.

The protein resides in the cell inner membrane. The catalysed reaction is di-trans,octa-cis-undecaprenyl diphosphate + H2O = di-trans,octa-cis-undecaprenyl phosphate + phosphate + H(+). In terms of biological role, catalyzes the dephosphorylation of undecaprenyl diphosphate (UPP). Confers resistance to bacitracin. The polypeptide is Undecaprenyl-diphosphatase (Pelagibacter ubique (strain HTCC1062)).